The chain runs to 160 residues: UPF0178 protein PA14_69280 (160 aa).

It belongs to the UPF0178 family.

The chain is UPF0178 protein PA14_69280 from Pseudomonas aeruginosa (strain UCBPP-PA14).